Here is a 148-residue protein sequence, read N- to C-terminus: Arginine repressor (148 aa).

The protein belongs to the ArgR family.

The protein localises to the cytoplasm. It functions in the pathway amino-acid biosynthesis; L-arginine biosynthesis [regulation]. In terms of biological role, regulates arginine biosynthesis genes. The sequence is that of Arginine repressor from Pelodictyon phaeoclathratiforme (strain DSM 5477 / BU-1).